A 499-amino-acid polypeptide reads, in one-letter code: Glycerol kinase (499 aa).

Threonine 13 is a binding site for ADP. Threonine 13, threonine 14, and serine 15 together coordinate ATP. Threonine 13 provides a ligand contact to sn-glycerol 3-phosphate. Arginine 17 is an ADP binding site. Arginine 83, glutamate 84, tyrosine 135, and aspartate 245 together coordinate sn-glycerol 3-phosphate. Residues arginine 83, glutamate 84, tyrosine 135, aspartate 245, and glutamine 246 each contribute to the glycerol site. Residues threonine 267 and glycine 310 each coordinate ADP. ATP is bound by residues threonine 267, glycine 310, glutamine 314, and alanine 411. ADP-binding residues include alanine 411 and asparagine 415.

The protein belongs to the FGGY kinase family.

The catalysed reaction is glycerol + ATP = sn-glycerol 3-phosphate + ADP + H(+). It functions in the pathway polyol metabolism; glycerol degradation via glycerol kinase pathway; sn-glycerol 3-phosphate from glycerol: step 1/1. Its activity is regulated as follows. Inhibited by fructose 1,6-bisphosphate (FBP). In terms of biological role, key enzyme in the regulation of glycerol uptake and metabolism. Catalyzes the phosphorylation of glycerol to yield sn-glycerol 3-phosphate. The protein is Glycerol kinase of Xylella fastidiosa (strain 9a5c).